The chain runs to 363 residues: Trichothecene biosynthesis protein 14 (363 aa).

Belongs to the TRI14 family.

In terms of biological role, part of the gene cluster that mediates the production of the antimicrobial trichothecene harzianum A (HA) that plays a role in Botrytis cinerea antagonistic activity and plant defense priming. The biosynthesis of harzianum A begins with the cyclization of farnesyl diphosphate to trichodiene and is catalyzed by the trichodiene synthase TRI5. Trichodiene undergoes a series of oxygenations catalyzed by the cytochrome P450 monooxygenase TRI4. TRI4 controls the addition of 3 oxygens at C-2, C-11, and the C-12, C-13-epoxide to form the intermediate isotrichodiol. Isotrichodiol then undergoes a non-enzymatic isomerization and cyclization to form 12,13-epoxytrichothec-9-ene (EPT) which is further converted to trichodermol by the cytochrome P450 monooxygenase TRI11 via C-4 hydroxylation. The last step of HA synthesis is esterification of an octatriendioyl moiety to the C-4 oxygen of trichodermol. The octatriendioyl moiety is probably produced by the polyketide synthase TRI17 and the esterification performed by the trichothecene O-acetyltransferase TRI3. This chain is Trichothecene biosynthesis protein 14, found in Trichoderma arundinaceum.